A 90-amino-acid chain; its full sequence is Bombyxin B-7 (90 aa).

The first 20 residues, 1–20, serve as a signal peptide directing secretion; that stretch reads MMKTSVMLMLVVVISLMCSG. 3 disulfide bridges follow: Cys30-Cys76, Cys42-Cys89, and Cys75-Cys80. The propeptide at 49 to 67 is c peptide like; it reads GGAQYAPYFWTRQYLGSRG.

This sequence belongs to the insulin family. Heterodimer of a B chain and an A chain linked by two disulfide bonds.

It localises to the secreted. Functionally, brain peptide responsible for activation of prothoracic glands to produce ecdysone in insects. The protein is Bombyxin B-7 (BBXB7) of Bombyx mori (Silk moth).